A 65-amino-acid polypeptide reads, in one-letter code: UPF0434 protein CC_0108 (65 aa).

This sequence belongs to the UPF0434 family.

The sequence is that of UPF0434 protein CC_0108 from Caulobacter vibrioides (strain ATCC 19089 / CIP 103742 / CB 15) (Caulobacter crescentus).